A 395-amino-acid polypeptide reads, in one-letter code: MHC class I-like protein MILL1 (395 aa).

Positions 1–32 are cleaved as a signal peptide; the sequence is MLLSRNLRALAAIHLWIVYLLLEDLLGTCAEG. Residues 57–148 are alpha-1; that stretch reads AVAEPHTLRY…ITAQNGQNTD (92 aa). 3 N-linked (GlcNAc...) asparagine glycosylation sites follow: N98, N163, and N199. An alpha-2 region spans residues 149–240; sequence LHILQATFGC…SLRNGLLNTG (92 aa). Intrachain disulfides connect C158–C221 and C260–C317. The interval 241–337 is alpha-3; sequence FPKVIVTFRN…EPAATEAPVY (97 aa). Positions 242-333 constitute an Ig-like C1-type domain; it reads PKVIVTFRNY…HNINEPAATE (92 aa). The tract at residues 332 to 352 is disordered; sequence TEAPVYGARREQPPTSGVGSR. Positions 338–368 are connecting peptide; the sequence is GARREQPPTSGVGSRVGKSLWSAMTTALVVI. A lipid anchor (GPI-anchor amidated serine) is attached at S369. The propeptide at 370-395 is removed in mature form; it reads WTLSQKLMGPLLWFCSGGFCSFLQCW.

This sequence belongs to the MHC class I family. Heterodimer with B2M. N-glycosylated. In terms of tissue distribution, expressed in stomach, intestine, uterus, skeletal muscle and heart.

The protein localises to the cell membrane. The polypeptide is MHC class I-like protein MILL1 (Mus musculus (Mouse)).